The following is a 449-amino-acid chain: Pectate lyase L (449 aa).

A signal peptide spans 1-26 (MFKRNDRSKNGFNALRLGVSFVLASS). The N-palmitoyl cysteine moiety is linked to residue cysteine 27. Cysteine 27 carries S-diacylglycerol cysteine lipidation. PbH1 repeat units follow at residues 158–179 (GDFW…IYIG), 180–202 (GSNN…QLGR), 213–242 (PANN…AAKL), 245–267 (GSGN…DLYS), 274–308 (IGAV…KLGG), 336–358 (PGTI…AFDK), and 359–391 (GEHV…WWKN). Residues aspartate 236, aspartate 260, aspartate 261, and aspartate 264 each contribute to the Ca(2+) site. Lysine 305 acts as the Proton acceptor in catalysis.

Belongs to the polysaccharide lyase 9 family. Requires Ca(2+) as cofactor.

The protein resides in the secreted. It catalyses the reaction Eliminative cleavage of (1-&gt;4)-alpha-D-galacturonan to give oligosaccharides with 4-deoxy-alpha-D-galact-4-enuronosyl groups at their non-reducing ends.. Activated in presence of the surfactant polysorbate 20, while inhibited in the presence of polysorbate 40, polysorbate 60, polysorbate 80, Triton X-100 and sodium dodecyl sulfate. Inhibited by the metal chelator ethylenediaminetetraacetic acid (EDTA). Inhibited by iron and cobalt ions. Presents an endo-cleaving activity on the homogalacturonan (HG) region in pectin with a preference for low- or unmethylated pectin. The sequence is that of Pectate lyase L from Paenibacillus polymyxa (strain SC2) (Bacillus polymyxa).